Reading from the N-terminus, the 426-residue chain is 3-phosphoshikimate 1-carboxyvinyltransferase (426 aa).

Lys-21, Ser-22, and Arg-26 together coordinate 3-phosphoshikimate. Lys-21 is a binding site for phosphoenolpyruvate. The phosphoenolpyruvate site is built by Gly-93 and Arg-121. Ser-165, Gln-167, Asp-313, and Lys-340 together coordinate 3-phosphoshikimate. Position 167 (Gln-167) interacts with phosphoenolpyruvate. Asp-313 acts as the Proton acceptor in catalysis. Residues Arg-344 and Arg-386 each coordinate phosphoenolpyruvate.

This sequence belongs to the EPSP synthase family. As to quaternary structure, monomer.

It localises to the cytoplasm. It catalyses the reaction 3-phosphoshikimate + phosphoenolpyruvate = 5-O-(1-carboxyvinyl)-3-phosphoshikimate + phosphate. It functions in the pathway metabolic intermediate biosynthesis; chorismate biosynthesis; chorismate from D-erythrose 4-phosphate and phosphoenolpyruvate: step 6/7. In terms of biological role, catalyzes the transfer of the enolpyruvyl moiety of phosphoenolpyruvate (PEP) to the 5-hydroxyl of shikimate-3-phosphate (S3P) to produce enolpyruvyl shikimate-3-phosphate and inorganic phosphate. This is 3-phosphoshikimate 1-carboxyvinyltransferase from Solibacter usitatus (strain Ellin6076).